A 667-amino-acid chain; its full sequence is E3 ubiquitin-protein ligase Midline-1 (667 aa).

An RING-type zinc finger spans residues 10-60; it reads CPICLELFEDPLLLPCAHSLCFNCAHRILVSHCATNESVESITAFQCPTCR. 2 positions are modified to phosphoserine: Ser-92 and Ser-96. 2 consecutive B box-type zinc fingers follow at residues 116–165 and 172–212; these read KVLC…IEPI and GLMC…VAAL. Zn(2+)-binding residues include Cys-119, Cys-122, Cys-134, Cys-137, Cys-142, Cys-145, His-150, His-159, Cys-175, His-178, Cys-198, and His-204. Positions 205 to 264 form a coiled coil; the sequence is RDHQVAALSERYDKLKQNLESNLTNLIKRNTELETLLAKLIQTCQHVEVNASRQEAKLTE. Residues 320-379 enclose the COS domain; that stretch reads LKENDHARFLQTAKNITERVSMATASSQVLIPEINLNDTFDTFALDFSREKKLLECLDYL. Residues 381 to 484 form the Fibronectin type-III domain; that stretch reads APNPPTIREE…EPGKLKTNSQ (104 aa). Positions 471–485 are enriched in polar residues; the sequence is SRSSEPGKLKTNSQP. The disordered stretch occupies residues 471–524; the sequence is SRSSEPGKLKTNSQPFKLDPKSAHRKLKVSHDNLTVERDESSSKKSHTPERFTS. The B30.2/SPRY domain maps to 482 to 659; sequence NSQPFKLDPK…IITGLPIPDH (178 aa). Positions 499-520 are enriched in basic and acidic residues; sequence VSHDNLTVERDESSSKKSHTPE. Ser-511 is subject to Phosphoserine.

Belongs to the TRIM/RBCC family. Homodimer or heterodimer with MID2. Interacts with IGBP1. Interacts with TRIM16. Phosphorylated on serine and threonine residues. In terms of tissue distribution, in the fetus, highest expression found in kidney, followed by brain and lung. Expressed at low levels in fetal liver. In the adult, most abundant in heart, placenta and brain.

It localises to the cytoplasm. It is found in the cytoskeleton. The protein localises to the spindle. It catalyses the reaction S-ubiquitinyl-[E2 ubiquitin-conjugating enzyme]-L-cysteine + [acceptor protein]-L-lysine = [E2 ubiquitin-conjugating enzyme]-L-cysteine + N(6)-ubiquitinyl-[acceptor protein]-L-lysine.. Functionally, has E3 ubiquitin ligase activity towards IGBP1, promoting its monoubiquitination, which results in deprotection of the catalytic subunit of protein phosphatase PP2A, and its subsequent degradation by polyubiquitination. In Homo sapiens (Human), this protein is E3 ubiquitin-protein ligase Midline-1 (MID1).